A 264-amino-acid chain; its full sequence is 4-oxalocrotonate decarboxylase (264 aa).

This sequence belongs to the hydratase/decarboxylase family.

It catalyses the reaction (3E)-2-oxohex-3-enedioate + H(+) = 2-oxopent-4-enoate + CO2. It functions in the pathway aromatic compound metabolism; benzoate degradation via hydroxylation. The sequence is that of 4-oxalocrotonate decarboxylase (dmpH) from Pseudomonas sp. (strain CF600).